Reading from the N-terminus, the 643-residue chain is MIKVSLKDGSVKEFEAGLSVYEIAKSISEGLARNACCGVVNGKVCDLRNKINEDVSLSICTFDSQEGKDAVRHSISHVLAYAVKRLFPQTKLAIGPSIATGFYYDFDKDVAFSAQDLEKLEAEMKKIIKENPSIEKFELPRDEALELMKDEPYKVELINDLGEDEIISFYKIGEFTDLCAGPHVMSLKPIKALKLTRSAGAYWKGDEKNKMLTRIYGTAFLKKSELDEYLEAIEEAKKRDHNKLGRELKLFTTDENVGQGLPLLMPKGAKIVQTLQRWVEDEEERRGYVLTKTPLMAKSDLYKISGHWDHYKDGMFVLGDEEKDEEVFALRPMTCPFQYTIYNAEQHSYRDLPIRYGETSTLFRNESSGEMHGLIRVRQFTLADGHLIVTPEQLEEEFKGVLELIQYLMKTLGIDEDISYRFSKWDPNNTEKYINDPEAWNKTQDTMRTILDHLKINYVEADDEAAFYGPKLDLQCRNVHGKEDTLFTVQIDFALAERFDMSYIDKNGEKKRPYIIHRSSIGCYERTLAMLIEKYAGAFPTWLSPVQVKVLPISDKYNDYAESVVKSLRNKGVRIEADYRAEKIGYKIREARLERTPYILVVGEKEAANNEVSVRSRKNDDEGAIKLDAFTERLLNEIATKER.

The TGS domain maps to 1 to 61; the sequence is MIKVSLKDGS…NEDVSLSICT (61 aa). The tract at residues 240 to 540 is catalytic; that stretch reads DHNKLGRELK…LIEKYAGAFP (301 aa). Zn(2+)-binding residues include Cys335, His386, and His517.

Belongs to the class-II aminoacyl-tRNA synthetase family. Homodimer. It depends on Zn(2+) as a cofactor.

The protein resides in the cytoplasm. It carries out the reaction tRNA(Thr) + L-threonine + ATP = L-threonyl-tRNA(Thr) + AMP + diphosphate + H(+). Functionally, catalyzes the attachment of threonine to tRNA(Thr) in a two-step reaction: L-threonine is first activated by ATP to form Thr-AMP and then transferred to the acceptor end of tRNA(Thr). Also edits incorrectly charged L-seryl-tRNA(Thr). This Clostridium botulinum (strain Alaska E43 / Type E3) protein is Threonine--tRNA ligase.